The chain runs to 312 residues: Olfactory receptor 6C75 (312 aa).

Over 1-23 (MRNSTAVTDFILLGLTSDPQWQV) the chain is Extracellular. A glycan (N-linked (GlcNAc...) asparagine) is linked at asparagine 3. Residues 24–44 (VLFIFLLVTYMLSVTGNLIII) form a helical membrane-spanning segment. Residues 45-63 (TLTLSDPHLQTPMYFFLRN) are Cytoplasmic-facing. A helical membrane pass occupies residues 64-84 (FSFLEISFTSVCIPRFLVTVV). Over 85 to 95 (TGNRTISYNGC) the chain is Extracellular. An intrachain disulfide couples cysteine 95 to cysteine 177. The helical transmembrane segment at 96-116 (VAQLFFFIFLGVTEFYLLAAM) threads the bilayer. Residues 117–140 (SYDRCMAICKPLHYTIIMSTRVCT) are Cytoplasmic-facing. Residues 141–161 (LLVFSSWLAGFLIIFPPVMLL) traverse the membrane as a helical segment. The Extracellular segment spans residues 162–194 (LQLDFCASNVIDHFICDSSPMLQLSCTNTHFLE). A helical transmembrane segment spans residues 195–215 (LMAFFLAVVTLMVTLTLVILS). The Cytoplasmic segment spans residues 216 to 237 (YTNIIRTILKIPSMSQRKKAFS). The helical transmembrane segment at 238-258 (TCSSHMIVVSISYSSCIFMYI) threads the bilayer. Residues 259–269 (KTSARERVTLS) are Extracellular-facing. Residues 270-290 (KGVAVLNTSVAPLLNPFIYTL) traverse the membrane as a helical segment. Topologically, residues 291-312 (RNKQVKQAFKSMVQKMIFSLNK) are cytoplasmic.

The protein belongs to the G-protein coupled receptor 1 family.

It is found in the cell membrane. Its function is as follows. Odorant receptor. The chain is Olfactory receptor 6C75 (OR6C75) from Homo sapiens (Human).